A 314-amino-acid chain; its full sequence is tRNA-cytidine(32) 2-sulfurtransferase (314 aa).

Positions 53-58 match the PP-loop motif motif; sequence SGGKDS. Positions 128, 131, and 219 each coordinate [4Fe-4S] cluster.

The protein belongs to the TtcA family. In terms of assembly, homodimer. Mg(2+) is required as a cofactor. The cofactor is [4Fe-4S] cluster.

It localises to the cytoplasm. The catalysed reaction is cytidine(32) in tRNA + S-sulfanyl-L-cysteinyl-[cysteine desulfurase] + AH2 + ATP = 2-thiocytidine(32) in tRNA + L-cysteinyl-[cysteine desulfurase] + A + AMP + diphosphate + H(+). The protein operates within tRNA modification. Catalyzes the ATP-dependent 2-thiolation of cytidine in position 32 of tRNA, to form 2-thiocytidine (s(2)C32). The sulfur atoms are provided by the cysteine/cysteine desulfurase (IscS) system. The sequence is that of tRNA-cytidine(32) 2-sulfurtransferase from Colwellia psychrerythraea (strain 34H / ATCC BAA-681) (Vibrio psychroerythus).